Here is a 463-residue protein sequence, read N- to C-terminus: Fumarate hydratase class II (463 aa).

Substrate-binding positions include 95–97 (SGT), 126–129 (HPND), 136–138 (SSN), and Thr184. Residue His185 is the Proton donor/acceptor of the active site. Ser315 is an active-site residue. Substrate contacts are provided by residues Ser316 and 321 to 323 (KIN).

The protein belongs to the class-II fumarase/aspartase family. Fumarase subfamily. As to quaternary structure, homotetramer.

It is found in the cytoplasm. The catalysed reaction is (S)-malate = fumarate + H2O. It participates in carbohydrate metabolism; tricarboxylic acid cycle; (S)-malate from fumarate: step 1/1. In terms of biological role, involved in the TCA cycle. Catalyzes the stereospecific interconversion of fumarate to L-malate. The sequence is that of Fumarate hydratase class II from Chlamydia trachomatis serovar D (strain ATCC VR-885 / DSM 19411 / UW-3/Cx).